Reading from the N-terminus, the 665-residue chain is tRNA 5-methylaminomethyl-2-thiouridine biosynthesis bifunctional protein MnmC (665 aa).

The segment at 1–243 (MSQTSLHHAR…KWAMLAGERV (243 aa)) is tRNA (mnm(5)s(2)U34)-methyltransferase. Residues 268 to 665 (IGGGIASAMT…RKLLKGKPLN (398 aa)) are FAD-dependent cmnm(5)s(2)U34 oxidoreductase.

This sequence in the N-terminal section; belongs to the methyltransferase superfamily. tRNA (mnm(5)s(2)U34)-methyltransferase family. It in the C-terminal section; belongs to the DAO family. Requires FAD as cofactor.

It is found in the cytoplasm. It catalyses the reaction 5-aminomethyl-2-thiouridine(34) in tRNA + S-adenosyl-L-methionine = 5-methylaminomethyl-2-thiouridine(34) in tRNA + S-adenosyl-L-homocysteine + H(+). Its function is as follows. Catalyzes the last two steps in the biosynthesis of 5-methylaminomethyl-2-thiouridine (mnm(5)s(2)U) at the wobble position (U34) in tRNA. Catalyzes the FAD-dependent demodification of cmnm(5)s(2)U34 to nm(5)s(2)U34, followed by the transfer of a methyl group from S-adenosyl-L-methionine to nm(5)s(2)U34, to form mnm(5)s(2)U34. The polypeptide is tRNA 5-methylaminomethyl-2-thiouridine biosynthesis bifunctional protein MnmC (Aeromonas salmonicida (strain A449)).